The chain runs to 211 residues: Protein N-terminal glutamine amidohydrolase (211 aa).

Residues cysteine 24, histidine 78, and aspartate 94 contribute to the active site.

The protein belongs to the NTAQ1 family. In terms of assembly, monomer.

It catalyses the reaction N-terminal L-glutaminyl-[protein] + H2O = N-terminal L-glutamyl-[protein] + NH4(+). Its function is as follows. Mediates the side-chain deamidation of N-terminal glutamine residues to glutamate, an important step in N-end rule pathway of protein degradation. Conversion of the resulting N-terminal glutamine to glutamate renders the protein susceptible to arginylation, polyubiquitination and degradation as specified by the N-end rule. Does not act on substrates with internal or C-terminal glutamine and does not act on non-glutamine residues in any position. The chain is Protein N-terminal glutamine amidohydrolase (tun) from Anopheles gambiae (African malaria mosquito).